We begin with the raw amino-acid sequence, 336 residues long: DNA-directed RNA polymerase subunit alpha (336 aa).

The tract at residues 1–226 (MLIAQRPTLS…ELFGLARELN (226 aa)) is alpha N-terminal domain (alpha-NTD). The interval 241 to 336 (AALAADMALP…DDAAFSDDEL (96 aa)) is alpha C-terminal domain (alpha-CTD).

Belongs to the RNA polymerase alpha chain family. In terms of assembly, homodimer. The RNAP catalytic core consists of 2 alpha, 1 beta, 1 beta' and 1 omega subunit. When a sigma factor is associated with the core the holoenzyme is formed, which can initiate transcription.

The catalysed reaction is RNA(n) + a ribonucleoside 5'-triphosphate = RNA(n+1) + diphosphate. DNA-dependent RNA polymerase catalyzes the transcription of DNA into RNA using the four ribonucleoside triphosphates as substrates. The sequence is that of DNA-directed RNA polymerase subunit alpha from Arthrobacter sp. (strain FB24).